The following is a 595-amino-acid chain: Apolipoprotein N-acyltransferase 2 (595 aa).

The next 5 membrane-spanning stretches (helical) occupy residues 30-50 (FLAF…FGFF), 63-83 (LFFH…HWII), 95-115 (VVAI…FPIF), 167-187 (AEIT…YTLF), and 210-230 (FITL…FLFK). The CN hydrolase domain occupies 241-555 (LNVLIVQPDA…AEALSETIDV (315 aa)). Glutamate 293 acts as the Proton acceptor in catalysis. The active site involves lysine 372. Catalysis depends on cysteine 463, which acts as the Nucleophile. The helical transmembrane segment at 569–589 (LIPWLMLFLTGIYYLNLLIGI) threads the bilayer.

This sequence belongs to the CN hydrolase family. Apolipoprotein N-acyltransferase subfamily.

Its subcellular location is the cell inner membrane. The enzyme catalyses N-terminal S-1,2-diacyl-sn-glyceryl-L-cysteinyl-[lipoprotein] + a glycerophospholipid = N-acyl-S-1,2-diacyl-sn-glyceryl-L-cysteinyl-[lipoprotein] + a 2-acyl-sn-glycero-3-phospholipid + H(+). The protein operates within protein modification; lipoprotein biosynthesis (N-acyl transfer). Functionally, catalyzes the phospholipid dependent N-acylation of the N-terminal cysteine of apolipoprotein, the last step in lipoprotein maturation. The polypeptide is Apolipoprotein N-acyltransferase 2 (Leptospira interrogans serogroup Icterohaemorrhagiae serovar Lai (strain 56601)).